The following is a 638-amino-acid chain: Glucans biosynthesis glucosyltransferase H (638 aa).

6 helical membrane-spanning segments follow: residues 60 to 82, 97 to 119, 415 to 437, 464 to 486, 499 to 521, and 578 to 600; these read FYLI…AVMW, FMFL…FCVV, IGHY…IPLV, LWIF…FALL, LRVL…VVMY, and LAMW…ALTS.

Belongs to the glycosyltransferase 2 family. OpgH subfamily.

The protein resides in the cell inner membrane. The protein operates within glycan metabolism; osmoregulated periplasmic glucan (OPG) biosynthesis. Involved in the biosynthesis of osmoregulated periplasmic glucans (OPGs). In Xylella fastidiosa (strain 9a5c), this protein is Glucans biosynthesis glucosyltransferase H.